The sequence spans 143 residues: UPF0292 protein Mbar_A0484 (143 aa).

The Toprim domain occupies 28–109 (GAIIIVEGKR…KPELEIRNKL (82 aa)). The Mg(2+) site is built by Glu-34, Asp-78, and Asp-80.

This sequence belongs to the UPF0292 family. The cofactor is Mg(2+).

This chain is UPF0292 protein Mbar_A0484, found in Methanosarcina barkeri (strain Fusaro / DSM 804).